Here is a 101-residue protein sequence, read N- to C-terminus: Small ribosomal subunit protein uS14 (101 aa).

The tract at residues 32–62 (GDAKRSDAEREAARLGLQKLPRNANPTRQRN) is disordered. Residues 33–44 (DAKRSDAEREAA) are compositionally biased toward basic and acidic residues.

The protein belongs to the universal ribosomal protein uS14 family. As to quaternary structure, part of the 30S ribosomal subunit. Contacts proteins S3 and S10.

Its function is as follows. Binds 16S rRNA, required for the assembly of 30S particles and may also be responsible for determining the conformation of the 16S rRNA at the A site. The chain is Small ribosomal subunit protein uS14 from Verminephrobacter eiseniae (strain EF01-2).